The following is a 320-amino-acid chain: Reticulocalbin-2 (320 aa).

Positions 1 to 25 (MRLGPRPAALGLLLPLLLYAAVAGA) are cleaved as a signal peptide. EF-hand domains are found at residues 64 to 99 (EQQRRLQSIIKKIDSDSDGFLTENELSQWIQMSFKH) and 100 to 135 (YAMQEAKQQFVEYDKNSDGAVTWDEYNIQMYDRVID). Ca(2+)-binding residues include Asp77, Asp79, Asp81, Glu88, Asp113, Asn115, Asp117, and Glu124. Residue Thr140 is modified to Phosphothreonine. EF-hand domains follow at residues 150-185 (FRQLHLKDKKRFEKANQDSGPGLSLEEFIAFEHPEE), 189-224 (MTEFVIQEALEEHDKNGDGFVSLEEFLGDYRRDPTA), 230-265 (WILVEKDRFVNDYDKDNDGRLDPQELLSWVVPNNQG), and 266-301 (IAQEEALHLIDEMDLNSDKKLSEEEILENQDLFLTS). Ca(2+)-binding residues include Asp167, Glu176, Asp202, Asn204, Asp206, Glu213, Asp243, Asp245, Asp247, Arg249, Glu254, Asp279, Asn281, Asp283, Lys285, and Glu290. The Prevents secretion from ER motif lies at 317–320 (HDEL).

This sequence belongs to the CREC family.

It is found in the endoplasmic reticulum lumen. Not known. Binds calcium. In Mus musculus (Mouse), this protein is Reticulocalbin-2 (Rcn2).